The primary structure comprises 182 residues: Probable pyruvoyl-dependent arginine decarboxylase (182 aa).

A Pyruvic acid (Ser) modification is found at serine 43.

This sequence belongs to the PdaD family. The cofactor is pyruvate.

It catalyses the reaction L-arginine + H(+) = agmatine + CO2. This chain is Probable pyruvoyl-dependent arginine decarboxylase, found in Chloroherpeton thalassium (strain ATCC 35110 / GB-78).